The following is a 429-amino-acid chain: 3-phosphoshikimate 1-carboxyvinyltransferase (429 aa).

3 residues coordinate 3-phosphoshikimate: lysine 20, serine 21, and arginine 25. Lysine 20 lines the phosphoenolpyruvate pocket. Phosphoenolpyruvate is bound by residues glycine 89 and arginine 118. The 3-phosphoshikimate site is built by serine 164, serine 165, glutamine 166, serine 192, aspartate 311, and lysine 338. Residue glutamine 166 participates in phosphoenolpyruvate binding. The Proton acceptor role is filled by aspartate 311. Phosphoenolpyruvate contacts are provided by arginine 342 and arginine 384.

Belongs to the EPSP synthase family. As to quaternary structure, monomer.

Its subcellular location is the cytoplasm. The catalysed reaction is 3-phosphoshikimate + phosphoenolpyruvate = 5-O-(1-carboxyvinyl)-3-phosphoshikimate + phosphate. The protein operates within metabolic intermediate biosynthesis; chorismate biosynthesis. Catalyzes the transfer of the enolpyruvyl moiety of phosphoenolpyruvate (PEP) to the 5-hydroxyl of shikimate-3-phosphate (S3P) to produce enolpyruvyl shikimate-3-phosphate and inorganic phosphate. The polypeptide is 3-phosphoshikimate 1-carboxyvinyltransferase (Methanococcus maripaludis (strain C5 / ATCC BAA-1333)).